Here is a 108-residue protein sequence, read N- to C-terminus: Translation initiation factor 1A (108 aa).

The S1-like domain occupies 11-85; it reads PSRDVPRPEE…NRCDILYKYG (75 aa).

The protein belongs to the eIF-1A family.

In terms of biological role, seems to be required for maximal rate of protein biosynthesis. Enhances ribosome dissociation into subunits and stabilizes the binding of the initiator Met-tRNA(I) to 40 S ribosomal subunits. The protein is Translation initiation factor 1A (eIF1A) of Saccharolobus solfataricus (strain ATCC 35092 / DSM 1617 / JCM 11322 / P2) (Sulfolobus solfataricus).